Consider the following 155-residue polypeptide: Putative ATP synthase protein YMF19-like protein (155 aa).

3 consecutive transmembrane segments (helical) span residues 23–43 (FLWLCLFYITFYFVLYSVLVF), 89–109 (WRALILAYLTSIYFFPILGSF), and 117–137 (VDFGYIPTVCILLYVIFLFFF).

Belongs to the ATPase protein YMF19 family.

The protein resides in the mitochondrion membrane. In Marchantia polymorpha (Common liverwort), this protein is Putative ATP synthase protein YMF19-like protein (YMF18).